We begin with the raw amino-acid sequence, 234 residues long: Synaptogyrin-4 (234 aa).

Residues 18–169 enclose the MARVEL domain; it reads FLKRPKAITR…QAYLAFQELR (152 aa). 4 consecutive transmembrane segments (helical) span residues 25–45, 66–86, 104–124, and 145–165; these read ITRI…LTDG, CSIA…FLAL, LLDL…FCFL, and AAIT…YLAF. The disordered stretch occupies residues 191–226; that stretch reads SPPSAASPVNTPTTGPHGPSYASSSLSPYLSTPKAP. Residues 209–221 show a composition bias toward low complexity; it reads PSYASSSLSPYLS.

Belongs to the synaptogyrin family.

The protein localises to the membrane. This chain is Synaptogyrin-4 (SYNGR4), found in Bos taurus (Bovine).